We begin with the raw amino-acid sequence, 686 residues long: Glycine--tRNA ligase beta subunit (686 aa).

The tract at residues 65-99 (ALSEEKRGPSVERAKDENGEWSKAAQGFARGQGAT) is disordered. Residues 67-84 (SEEKRGPSVERAKDENGE) are compositionally biased toward basic and acidic residues.

It belongs to the class-II aminoacyl-tRNA synthetase family. Tetramer of two alpha and two beta subunits.

It localises to the cytoplasm. It catalyses the reaction tRNA(Gly) + glycine + ATP = glycyl-tRNA(Gly) + AMP + diphosphate. The sequence is that of Glycine--tRNA ligase beta subunit from Leuconostoc citreum (strain KM20).